The sequence spans 447 residues: F-box only protein 5 (447 aa).

Residues Ser-94 and Ser-102 each carry the phosphoserine modification. The tract at residues 135–244 (ALETSRLYED…IGRKMGLECV (110 aa)) is interaction with EVI5. In terms of domain architecture, F-box spans 250 to 296 (LFRRGLRHVLATILAQLSDMDLINVSKVSTTWKKILEDDKGAFQLYS). The interval 261 to 339 (TILAQLSDMD…KSAAQTSLKK (79 aa)) is sufficient for interaction with RPS6KA2; Prevents association of CDC20 with RPS6KA2. The segment at 261–409 (TILAQLSDMD…GCGFDYCTKC (149 aa)) is requires for efficient binding to CDC20. An inhibits APC ubiquitin ligase activity region spans residues 305–447 (NNNKFSPHAS…KKSKKNLRRL (143 aa)). A competitively blocks access of APC substrates to the D-box coreceptor formed by FZR1 and ANAPC10 region spans residues 322–325 (RTPL). Residues 337–358 (LKKDAQTKLSNQGDQKGSTYSR) form a disordered region. A compositionally biased stretch (polar residues) spans 343-357 (TKLSNQGDQKGSTYS). The ZBR-type zinc finger occupies 374–422 (SLKACIRCNSPAKYDCYLQRATCKREGCGFDYCTKCLCNYHTTKDCSDG). The Zn(2+) site is built by Cys-378, Cys-381, Cys-396, Cys-401, Cys-406, Cys-409, His-414, and Cys-419. The tract at residues 378–420 (CIRCNSPAKYDCYLQRATCKREGCGFDYCTKCLCNYHTTKDCS) is allows a rapid multiple mono-ubiquitination of the APC substrate, but strongly inhibits the slow ubiquitin chain elongation catalyzed by UBCH10. A sufficient to suppress UBE2S activity; essential for interaction with UBE2S; competitively inhibits the rapide ubiquitin chain elongation by UBE2D1 which blocks UBE2D1 with APC; indispensable for recruitment and position of FBXO5 to the catalytic site of APC; abrogates the inhibition of ubiquitin chain assembly primarily catalyzed by UBE2S; inhibits the ubiquitination by either UBE2C or UBE2D1 region spans residues 437–447 (TKKSKKNLRRL).

Part of a SCF (SKP1-cullin-F-box) protein ligase complex. Interacts with BTRC; mediates proteolysis by the SCF ubiquitin ligase complex leading to activation of APC in late mitosis and subsequent mitotic progression. Interacts with FZR1/CDH1 and the N-terminal substrate-binding domain of CDC20; prevents APC activation. Also interacts with EVI5 which blocks its phosphorylation by PLK1 and prevents its subsequent binding to BTRC and degradation. Interacts simultaneously with anaphase promoting complex (APC), through at least ANAPC2, CDC23, CDC27, the APC substrate GMNN and the APC activator FZR1. Interacts with UBE2S; interferes with the activity of UBE2S mainly by disrupting the dynamic electrostatic association between the C-terminal tail of UBE2S and ANAPC2. Interacts with RPS6KA2; cooperates to induce the metaphase arrest of early blastomeres; increases and stabilizes interaction of FBXO5 with CDC20. Post-translationally, phosphorylation by CDK2 and subsequently by PLK1 triggers degradation during early mitosis through ubiquitin-mediated proteolysis by the SCF ubiquitin ligase complex containing the F-box protein BTRC. This degradation is necessary for the activation of APC in late mitosis and subsequent mitotic progression. Phosphorylated by RPS6KA2; increases and stabilizes interaction with CDC20. In terms of processing, ubiquitinated by the SCF(BTRC) complex following phosphorylation by PLK1. Undergoes both 'Lys-11' and 'Lys-48'-linked polyubiquitination by APC-FZR1 complex leading to degradation by proteasome during G1 phase. Degraded through the SCF(BTRC) complex; degradation occurs during oocyte maturation, between germinal vesicle breakdown (GVBD) and meiosis I, and is required for the meiosis I-meiosis II transition.

The protein resides in the nucleus. Its subcellular location is the cytoplasm. It is found in the cytoskeleton. The protein localises to the spindle. The protein operates within protein modification; protein ubiquitination. Its function is as follows. Regulator of APC activity during mitotic and meiotic cell cycle. During mitotic cell cycle plays a role as both substrate and inhibitor of APC-FZR1 complex. During G1 phase, plays a role as substrate of APC-FZR1 complex E3 ligase. Then switches as an inhibitor of APC-FZR1 complex during S and G2 leading to cell-cycle commitment. As APC inhibitor, prevents the degradation of APC substrates at multiple levels: by interacting with APC and blocking access of APC substrates to the D-box coreceptor, formed by FZR1 and ANAPC10; by suppressing ubiquitin ligation and chain elongation by APC by preventing the UBE2C and UBE2S activities. Plays a role in genome integrity preservation by coordinating DNA replication with mitosis through APC inhibition in interphase to stabilize CCNA2 and GMNN in order to promote mitosis and prevent rereplication and DNA damage-induced cellular senescence. During oocyte maturation, plays a role in meiosis through inactivation of APC-FZR1 complex. Inhibits APC through RPS6KA2 interaction that increases FBXO5 affiniy for CDC20 leading to the metaphase arrest of the second meiotic division before fertilization. Controls entry into the first meiotic division through inactivation of APC-FZR1 complex. Promotes migration and osteogenic differentiation of mesenchymal stem cells. The chain is F-box only protein 5 from Homo sapiens (Human).